A 288-amino-acid polypeptide reads, in one-letter code: NAD(P)H-hydrate epimerase (288 aa).

A mitochondrion-targeting transit peptide spans 1–32 (MSGLRALLGLGLLVAGSRLSRVRVQAGSCRAG). Residue Ser49 is modified to Phosphoserine. One can recognise a YjeF N-terminal domain in the interval 65-275 (AQAVDQELFN…ALEKKYQLNL (211 aa)). 119–123 (NNGGD) contributes to the (6S)-NADPHX binding site. Residue Asn120 participates in K(+) binding. Lys144 bears the N6-succinyllysine mark. Position 185 (Asp185) interacts with K(+). Residues 189-195 (GFSFTGE) and Asp218 each bind (6S)-NADPHX. Ser221 contacts K(+).

Belongs to the NnrE/AIBP family. In terms of assembly, homodimer. Interacts with APOA1 and APOA2. K(+) is required as a cofactor. Undergoes physiological phosphorylation during sperm capacitation, downstream to PKA activation.

It localises to the mitochondrion. The protein resides in the secreted. It catalyses the reaction (6R)-NADHX = (6S)-NADHX. It carries out the reaction (6R)-NADPHX = (6S)-NADPHX. Catalyzes the epimerization of the S- and R-forms of NAD(P)HX, a damaged form of NAD(P)H that is a result of enzymatic or heat-dependent hydration. This is a prerequisite for the S-specific NAD(P)H-hydrate dehydratase to allow the repair of both epimers of NAD(P)HX. Accelerates cholesterol efflux from endothelial cells to high-density lipoprotein (HDL) and thereby regulates angiogenesis. In Bos taurus (Bovine), this protein is NAD(P)H-hydrate epimerase.